The chain runs to 136 residues: T-cell receptor beta chain V region LB2 (136 aa).

The signal sequence occupies residues 1-21 (MNKWVFCWVTLCLLTVETTHG). The segment at 22-116 (DGGIITQTPK…EMTVFLCASS (95 aa)) is v segment. A disulfide bond links cysteine 45 and cysteine 113. Residues 117 to 120 (IRLA) form a d segment region. A j segment region spans residues 121 to 136 (SAETLYFGSGTRLTVL).

This is T-cell receptor beta chain V region LB2 from Mus musculus (Mouse).